Consider the following 101-residue polypeptide: Urease subunit beta (101 aa).

The protein belongs to the urease beta subunit family. In terms of assembly, heterotrimer of UreA (gamma), UreB (beta) and UreC (alpha) subunits. Three heterotrimers associate to form the active enzyme.

The protein resides in the cytoplasm. It carries out the reaction urea + 2 H2O + H(+) = hydrogencarbonate + 2 NH4(+). The protein operates within nitrogen metabolism; urea degradation; CO(2) and NH(3) from urea (urease route): step 1/1. This is Urease subunit beta from Burkholderia orbicola (strain MC0-3).